A 371-amino-acid polypeptide reads, in one-letter code: tRNA-specific 2-thiouridylase MnmA 2 (371 aa).

ATP-binding positions include 13–20 and M39; that span reads GMSGGVDS. Positions 99 to 101 are interaction with target base in tRNA; it reads NPD. Residue C104 is the Nucleophile of the active site. C104 and C200 are joined by a disulfide. G128 lines the ATP pocket. The interval 150–152 is interaction with tRNA; it reads KDQ. C200 serves as the catalytic Cysteine persulfide intermediate. The segment at 308–309 is interaction with tRNA; the sequence is RY.

It belongs to the MnmA/TRMU family.

It localises to the cytoplasm. The enzyme catalyses S-sulfanyl-L-cysteinyl-[protein] + uridine(34) in tRNA + AH2 + ATP = 2-thiouridine(34) in tRNA + L-cysteinyl-[protein] + A + AMP + diphosphate + H(+). Its function is as follows. Catalyzes the 2-thiolation of uridine at the wobble position (U34) of tRNA, leading to the formation of s(2)U34. This Geobacillus kaustophilus (strain HTA426) protein is tRNA-specific 2-thiouridylase MnmA 2.